The sequence spans 398 residues: Phosphoglycerate kinase (398 aa).

Substrate-binding positions include 21–23 (DFN), Arg36, 59–62 (HLGR), Arg119, and Arg157. Residues Lys208, Gly296, Glu327, and 354 to 357 (GGDS) contribute to the ATP site.

Belongs to the phosphoglycerate kinase family. In terms of assembly, monomer.

The protein resides in the cytoplasm. The catalysed reaction is (2R)-3-phosphoglycerate + ATP = (2R)-3-phospho-glyceroyl phosphate + ADP. Its pathway is carbohydrate degradation; glycolysis; pyruvate from D-glyceraldehyde 3-phosphate: step 2/5. In Streptococcus agalactiae serotype Ia (strain ATCC 27591 / A909 / CDC SS700), this protein is Phosphoglycerate kinase.